A 285-amino-acid chain; its full sequence is Inositol polyphosphate 1-phosphatase (285 aa).

Mg(2+)-binding residues include E68, D106, L108, and D109. 1D-myo-inositol 1,4-bisphosphate contacts are provided by D109, G110, T111, S173, G195, S197, and K200. Mg(2+) is bound at residue D223.

Belongs to the inositol monophosphatase superfamily. As to quaternary structure, monomer. It depends on Mg(2+) as a cofactor.

It localises to the cytoplasm. It carries out the reaction 1D-myo-inositol 1,4-bisphosphate + H2O = 1D-myo-inositol 4-phosphate + phosphate. The catalysed reaction is adenosine 3',5'-bisphosphate + H2O = AMP + phosphate. Its activity is regulated as follows. Partially inhibited by Li(2+). Its function is as follows. Catalyzes the hydrolysis of the 1-position phosphate from inositol 1,4-bisphosphate. Is also able to convert 3'(2')-phosphoadenosine 5'-phosphate (PAP) to AMP but with less efficiency. This chain is Inositol polyphosphate 1-phosphatase, found in Entamoeba histolytica (strain ATCC 30459 / HM-1:IMSS / ABRM).